Reading from the N-terminus, the 72-residue chain is uncharacterized protein (72 aa).

The N-terminal stretch at 1 to 19 (MKKWAVIISAVGLAFAVSG) is a signal peptide. Cys-20 is lipidated: N-palmitoyl cysteine. Cys-20 is lipidated: S-diacylglycerol cysteine.

This sequence to E.coli YgdI.

The protein localises to the cell membrane. This is an uncharacterized protein from Escherichia coli O6:H1 (strain CFT073 / ATCC 700928 / UPEC).